The sequence spans 300 residues: Peroxisomal 2,4-dienoyl-CoA reductase [(3E)-enoyl-CoA-producing] (300 aa).

NADP(+) contacts are provided by residues G42–I47, R67–K71, and D93. R67 contacts substrate. Substrate-binding positions include R95, F125, and S133–N135. Residues K189 and P215 to T221 each bind NADP(+). R226 lines the substrate pocket. A Microbody targeting signal motif is present at residues A298 to L300.

The protein belongs to the short-chain dehydrogenases/reductases (SDR) family. 2,4-dienoyl-CoA reductase subfamily. As to quaternary structure, monomer, dimer and oligomer.

The protein localises to the peroxisome. It carries out the reaction a (2E,4Z)-dienoyl-CoA + NADPH + H(+) = a 4,5-saturated-(3E)-enoyl-CoA + NADP(+). It catalyses the reaction a (2E,4E)-dienoyl-CoA + NADPH + H(+) = a 4,5-saturated-(3E)-enoyl-CoA + NADP(+). The catalysed reaction is (2E,4E)-hexadienoyl-CoA + NADPH + H(+) = (3E)-hexenoyl-CoA + NADP(+). The enzyme catalyses (2E,4E)-decadienoyl-CoA + NADPH + H(+) = (3E)-decenoyl-CoA + NADP(+). It carries out the reaction (2E,4Z,7Z,10Z,13Z,16Z,19Z)-docosaheptaenoyl-CoA + NADPH + H(+) = (3E,7Z,10Z,13Z,16Z,19Z)-docosahexaenoyl-CoA + NADP(+). Functionally, auxiliary enzyme of beta-oxidation. Participates in the degradation of unsaturated fatty enoyl-CoA esters having double bonds in both even- and odd-numbered positions in peroxisome. Catalyzes the NADP-dependent reduction of 2,4-dienoyl-CoA to yield trans-3-enoyl-CoA. The chain is Peroxisomal 2,4-dienoyl-CoA reductase [(3E)-enoyl-CoA-producing] (decr2) from Danio rerio (Zebrafish).